The following is a 354-amino-acid chain: Thiamine thiazole synthase (354 aa).

Residues A83, 104–105 (EA), G112, and V177 contribute to the substrate site. A 2,3-didehydroalanine (Cys) modification is found at C210. Substrate-binding positions include D212, H227, M305, and 315–317 (RMR).

This sequence belongs to the THI4 family. Homooctamer. Requires Fe cation as cofactor. In terms of processing, during the catalytic reaction, a sulfide is transferred from Cys-210 to a reaction intermediate, generating a dehydroalanine residue.

It is found in the cytoplasm. The protein localises to the nucleus. The catalysed reaction is [ADP-thiazole synthase]-L-cysteine + glycine + NAD(+) = [ADP-thiazole synthase]-dehydroalanine + ADP-5-ethyl-4-methylthiazole-2-carboxylate + nicotinamide + 3 H2O + 2 H(+). Involved in biosynthesis of the thiamine precursor thiazole. Catalyzes the conversion of NAD and glycine to adenosine diphosphate 5-(2-hydroxyethyl)-4-methylthiazole-2-carboxylic acid (ADT), an adenylated thiazole intermediate. The reaction includes an iron-dependent sulfide transfer from a conserved cysteine residue of the protein to a thiazole intermediate. The enzyme can only undergo a single turnover, which suggests it is a suicide enzyme. May have additional roles in adaptation to various stress conditions and in DNA damage tolerance. The protein is Thiamine thiazole synthase of Candida albicans (strain WO-1) (Yeast).